Consider the following 258-residue polypeptide: Ubiquinone/menaquinone biosynthesis C-methyltransferase UbiE (258 aa).

S-adenosyl-L-methionine-binding positions include Thr-83, Asp-104, and 130 to 131; that span reads DA.

It belongs to the class I-like SAM-binding methyltransferase superfamily. MenG/UbiE family.

The catalysed reaction is a 2-demethylmenaquinol + S-adenosyl-L-methionine = a menaquinol + S-adenosyl-L-homocysteine + H(+). The enzyme catalyses a 2-methoxy-6-(all-trans-polyprenyl)benzene-1,4-diol + S-adenosyl-L-methionine = a 5-methoxy-2-methyl-3-(all-trans-polyprenyl)benzene-1,4-diol + S-adenosyl-L-homocysteine + H(+). The protein operates within quinol/quinone metabolism; menaquinone biosynthesis; menaquinol from 1,4-dihydroxy-2-naphthoate: step 2/2. It participates in cofactor biosynthesis; ubiquinone biosynthesis. Its function is as follows. Methyltransferase required for the conversion of demethylmenaquinol (DMKH2) to menaquinol (MKH2) and the conversion of 2-polyprenyl-6-methoxy-1,4-benzoquinol (DDMQH2) to 2-polyprenyl-3-methyl-6-methoxy-1,4-benzoquinol (DMQH2). The protein is Ubiquinone/menaquinone biosynthesis C-methyltransferase UbiE of Bordetella bronchiseptica (strain ATCC BAA-588 / NCTC 13252 / RB50) (Alcaligenes bronchisepticus).